A 421-amino-acid chain; its full sequence is General transcription factor IIH subunit 2 (421 aa).

The disordered stretch occupies residues 1–26 (MSNQRKRSNDEREEEDDEDAEGIGEW). Residues 11 to 24 (EREEEDDEDAEGIG) are compositionally biased toward acidic residues. One can recognise a VWFA domain in the interval 83–272 (YLYIVIDFSR…IAEFAIANLI (190 aa)). An RING-type zinc finger spans residues 362–408 (CFGCQQSLIGAGNKPVPCVTCRKCKHYFCLDCDIYIHESLHNCPGCE).

Belongs to the GTF2H2 family. In terms of assembly, component of the 7-subunit TFIIH core complex composed of XPB, XPD, TFB1/GTF2H1, GTF2H2/P44, TFB4/GTF2H3, TFB2/GTF2H4 and TFB5/GTF2H5, which is active in NER. The core complex associates with the 3-subunit CDK-activating kinase (CAK) module composed of CYCH1/cyclin H1, CDKD and MAT1/At4g30820 to form the 10-subunit holoenzyme (holo-TFIIH) active in transcription. Interacts with XPD.

The protein resides in the nucleus. Component of the general transcription and DNA repair factor IIH (TFIIH) core complex, which is involved in general and transcription-coupled nucleotide excision repair (NER) of damaged DNA and, when complexed to CAK, in RNA transcription by RNA polymerase II. In NER, TFIIH acts by opening DNA around the lesion to allow the excision of the damaged oligonucleotide and its replacement by a new DNA fragment. In transcription, TFIIH has an essential role in transcription initiation. When the pre-initiation complex (PIC) has been established, TFIIH is required for promoter opening and promoter escape. Phosphorylation of the C-terminal tail (CTD) of the largest subunit of RNA polymerase II by the kinase module CAK controls the initiation of transcription. Can restore UV resistance in the NER-deficient ssl1-1 yeast mutant. In Arabidopsis thaliana (Mouse-ear cress), this protein is General transcription factor IIH subunit 2.